We begin with the raw amino-acid sequence, 137 residues long: Small ribosomal subunit protein bS16 (137 aa).

Belongs to the bacterial ribosomal protein bS16 family.

This is Small ribosomal subunit protein bS16 from Leuconostoc citreum (strain KM20).